The following is a 499-amino-acid chain: Guanosine-5'-triphosphate,3'-diphosphate pyrophosphatase (499 aa).

It belongs to the GppA/Ppx family. GppA subfamily.

It catalyses the reaction guanosine 3'-diphosphate 5'-triphosphate + H2O = guanosine 3',5'-bis(diphosphate) + phosphate + H(+). It functions in the pathway purine metabolism; ppGpp biosynthesis; ppGpp from GTP: step 2/2. Its function is as follows. Catalyzes the conversion of pppGpp to ppGpp. Guanosine pentaphosphate (pppGpp) is a cytoplasmic signaling molecule which together with ppGpp controls the 'stringent response', an adaptive process that allows bacteria to respond to amino acid starvation, resulting in the coordinated regulation of numerous cellular activities. This Sodalis glossinidius (strain morsitans) protein is Guanosine-5'-triphosphate,3'-diphosphate pyrophosphatase.